The primary structure comprises 582 residues: ATP-dependent lipid A-core flippase (582 aa).

The next 5 helical transmembrane spans lie at 16-36, 64-84, 153-173, 253-273, and 275-295; these read LWPTIAPFKAGLIVAGIALIL, LLWMPLVVIGLMILRGITSYI, IIGLFIMMFYYSWQLSIILVV, PIIQLIASLALAFVLYAASFP, and VMDSLTAGTITVVFSSMIALM. The region spanning 28 to 310 is the ABC transmembrane type-1 domain; sequence IVAGIALILN…LTNVNAQFQR (283 aa). The region spanning 342-578 is the ABC transporter domain; sequence LEFRNVTFTY…HGVYAQLHKM (237 aa). 376–383 lines the ATP pocket; the sequence is GRSGSGKS.

This sequence belongs to the ABC transporter superfamily. Lipid exporter (TC 3.A.1.106) family. In terms of assembly, homodimer.

The protein localises to the cell inner membrane. The enzyme catalyses ATP + H2O + lipid A-core oligosaccharideSide 1 = ADP + phosphate + lipid A-core oligosaccharideSide 2.. In terms of biological role, involved in lipopolysaccharide (LPS) biosynthesis. Translocates lipid A-core from the inner to the outer leaflet of the inner membrane. Transmembrane domains (TMD) form a pore in the inner membrane and the ATP-binding domain (NBD) is responsible for energy generation. The polypeptide is ATP-dependent lipid A-core flippase (Salmonella paratyphi A (strain ATCC 9150 / SARB42)).